The primary structure comprises 151 residues: MGRMHSSGKGISSSALPYSRNAPSWFKLSSDDVVEQIIKYARKGLTPSQIGVILRDAHGVSQAKVVTGNKILRILKSNGLAPEIPEDLYYLIKKAVSVRKHLEKNRKDKDSKFRLILIESRIHRLARYYRTVAVLPPNWKYESATASALVA.

It belongs to the universal ribosomal protein uS15 family. Component of the small ribosomal subunit. Mature ribosomes consist of a small (40S) and a large (60S) subunit. The 40S subunit contains about 32 different proteins and 1 molecule of RNA (18S). The 60S subunit contains 45 different proteins and 3 molecules of RNA (25S, 5.8S and 5S).

The protein resides in the cytoplasm. In terms of biological role, component of the ribosome, a large ribonucleoprotein complex responsible for the synthesis of proteins in the cell. The small ribosomal subunit (SSU) binds messenger RNAs (mRNAs) and translates the encoded message by selecting cognate aminoacyl-transfer RNA (tRNA) molecules. The large subunit (LSU) contains the ribosomal catalytic site termed the peptidyl transferase center (PTC), which catalyzes the formation of peptide bonds, thereby polymerizing the amino acids delivered by tRNAs into a polypeptide chain. The nascent polypeptides leave the ribosome through a tunnel in the LSU and interact with protein factors that function in enzymatic processing, targeting, and the membrane insertion of nascent chains at the exit of the ribosomal tunnel. This is Small ribosomal subunit protein uS15 (RPS13) from Candida albicans (strain SC5314 / ATCC MYA-2876) (Yeast).